We begin with the raw amino-acid sequence, 340 residues long: Ketol-acid reductoisomerase (NADP(+)) (340 aa).

Residues 1–183 (MAITVYYDKD…GGGRTGIIET (183 aa)) enclose the KARI N-terminal Rossmann domain. Residues 26 to 29 (FGSQ), Arg-49, Ser-52, Ser-54, and 84 to 87 (DEIQ) each bind NADP(+). Residue His-109 is part of the active site. Gly-135 provides a ligand contact to NADP(+). The KARI C-terminal knotted domain occupies 184 to 329 (TFKAETETDL…RNLRAMMPWI (146 aa)). 4 residues coordinate Mg(2+): Asp-192, Glu-196, Glu-228, and Glu-232. Substrate is bound at residue Ser-253.

The protein belongs to the ketol-acid reductoisomerase family. Mg(2+) serves as cofactor.

It catalyses the reaction (2R)-2,3-dihydroxy-3-methylbutanoate + NADP(+) = (2S)-2-acetolactate + NADPH + H(+). The enzyme catalyses (2R,3R)-2,3-dihydroxy-3-methylpentanoate + NADP(+) = (S)-2-ethyl-2-hydroxy-3-oxobutanoate + NADPH + H(+). It participates in amino-acid biosynthesis; L-isoleucine biosynthesis; L-isoleucine from 2-oxobutanoate: step 2/4. It functions in the pathway amino-acid biosynthesis; L-valine biosynthesis; L-valine from pyruvate: step 2/4. In terms of biological role, involved in the biosynthesis of branched-chain amino acids (BCAA). Catalyzes an alkyl-migration followed by a ketol-acid reduction of (S)-2-acetolactate (S2AL) to yield (R)-2,3-dihydroxy-isovalerate. In the isomerase reaction, S2AL is rearranged via a Mg-dependent methyl migration to produce 3-hydroxy-3-methyl-2-ketobutyrate (HMKB). In the reductase reaction, this 2-ketoacid undergoes a metal-dependent reduction by NADPH to yield (R)-2,3-dihydroxy-isovalerate. The polypeptide is Ketol-acid reductoisomerase (NADP(+)) (Campylobacter jejuni (strain RM1221)).